The primary structure comprises 429 residues: tRNA-2-methylthio-N(6)-dimethylallyladenosine synthase (429 aa).

The MTTase N-terminal domain maps to 2–115 (KLLYLQTLGC…ISEAVKTPKF (114 aa)). Residues C11, C46, C78, C147, C151, and C154 each coordinate [4Fe-4S] cluster. The Radical SAM core domain maps to 133–365 (RGSPYKAFVN…QSRHNEILDE (233 aa)). A TRAM domain is found at 368 to 429 (KNQVGKIFDV…RMVLYGKITA (62 aa)).

It belongs to the methylthiotransferase family. MiaB subfamily. As to quaternary structure, monomer. It depends on [4Fe-4S] cluster as a cofactor.

The protein localises to the cytoplasm. It carries out the reaction N(6)-dimethylallyladenosine(37) in tRNA + (sulfur carrier)-SH + AH2 + 2 S-adenosyl-L-methionine = 2-methylsulfanyl-N(6)-dimethylallyladenosine(37) in tRNA + (sulfur carrier)-H + 5'-deoxyadenosine + L-methionine + A + S-adenosyl-L-homocysteine + 2 H(+). Catalyzes the methylthiolation of N6-(dimethylallyl)adenosine (i(6)A), leading to the formation of 2-methylthio-N6-(dimethylallyl)adenosine (ms(2)i(6)A) at position 37 in tRNAs that read codons beginning with uridine. The polypeptide is tRNA-2-methylthio-N(6)-dimethylallyladenosine synthase (Campylobacter hominis (strain ATCC BAA-381 / DSM 21671 / CCUG 45161 / LMG 19568 / NCTC 13146 / CH001A)).